The chain runs to 363 residues: Peptide chain release factor 1 (363 aa).

Gln237 carries the post-translational modification N5-methylglutamine.

Belongs to the prokaryotic/mitochondrial release factor family. Methylated by PrmC. Methylation increases the termination efficiency of RF1.

The protein localises to the cytoplasm. Functionally, peptide chain release factor 1 directs the termination of translation in response to the peptide chain termination codons UAG and UAA. In Marinobacter nauticus (strain ATCC 700491 / DSM 11845 / VT8) (Marinobacter aquaeolei), this protein is Peptide chain release factor 1.